Consider the following 611-residue polypeptide: TANK-binding kinase 1-binding protein 1 (611 aa).

The segment at 1 to 280 (MESMFEDDIS…QDLASNQSEC (280 aa)) is homodimerization. Positions 48–162 (YGDIKERLGG…ALVETHLRQI (115 aa)) form a coiled coil. S184 is subject to Phosphoserine. Positions 218 to 277 (TSVSVSELERRRLEEALEAAQGEARGAQLREEQLQAECERLQGELKQLQETRAQDLASNQ) form a coiled coil. The interaction with TBK1 and IKBKE stretch occupies residues 281-330 (DMAWVKRVGDDQVNLALAYTELTEELGRLRELSSLQGRILRTLLQEQARN). A disordered region spans residues 328–437 (ARNAGQRHSP…PPPPPGERTL (110 aa)). Residues 346–361 (PACPSPSPPARPPPCA) are compositionally biased toward pro residues. Low complexity predominate over residues 362–372 (PCQSPAAQRRS). Residues S365, S372, S379, S385, S400, and S415 each carry the phosphoserine modification. Positions 389-406 (PSCPSPVPQRRSPVPPSC) are enriched in pro residues. A compositionally biased stretch (pro residues) spans 416-433 (PVPPSCPAPQPRPPPPPG). S500 and S530 each carry phosphoserine. A UBZ1-type zinc finger spans residues 579–605 (IRSCPLCQLGFPVGYPDDALIKHIDSH). C582, C585, H601, and H605 together coordinate Zn(2+).

Homodimer. May form a heterodimer with NAP1. Interacts with TKB1 and IKBKE. Weakly interacts with DDX3X.

Adapter protein which constitutively binds TBK1 and IKBKE playing a role in antiviral innate immunity. Essential for the efficient induction of IRF-dependent transcription following infection with Sendai virus. The sequence is that of TANK-binding kinase 1-binding protein 1 from Mus musculus (Mouse).